Reading from the N-terminus, the 551-residue chain is uncharacterized protein (551 aa).

Disordered stretches follow at residues 66-111, 130-165, 180-229, and 277-303; these read GNNK…STNL, PEAT…EKSN, AFNP…LSNL, and AFTS…VPLS. Phosphoserine is present on S74. 2 stretches are compositionally biased toward polar residues: residues 92–111 and 143–156; these read GFSN…STNL and VVNT…GTQE. A compositionally biased stretch (low complexity) spans 182–193; the sequence is NPSSVLPSNSSS. The segment covering 204–226 has biased composition (polar residues); it reads KETYQPNTFRRSPLKNDTGSVEL. Positions 290 to 299 are enriched in low complexity; the sequence is TRPSSTRFPS.

This is an uncharacterized protein from Schizosaccharomyces pombe (strain 972 / ATCC 24843) (Fission yeast).